Here is a 198-residue protein sequence, read N- to C-terminus: Glycerol-3-phosphate acyltransferase 2 (198 aa).

A run of 4 helical transmembrane segments spans residues 4-24 (TYLLFIVAYLLGSIPFALVVG), 71-91 (LPIIFALDIHPLWFGLAAVLG), 113-133 (LLCYSPVVFAILAVVFFSLLF), and 147-167 (VVAVIASIVSGDKIFIIAMCL).

The protein belongs to the PlsY family. In terms of assembly, probably interacts with PlsX.

It is found in the cell membrane. The enzyme catalyses an acyl phosphate + sn-glycerol 3-phosphate = a 1-acyl-sn-glycero-3-phosphate + phosphate. It functions in the pathway lipid metabolism; phospholipid metabolism. In terms of biological role, catalyzes the transfer of an acyl group from acyl-phosphate (acyl-PO(4)) to glycerol-3-phosphate (G3P) to form lysophosphatidic acid (LPA). This enzyme utilizes acyl-phosphate as fatty acyl donor, but not acyl-CoA or acyl-ACP. The polypeptide is Glycerol-3-phosphate acyltransferase 2 (Bacillus cereus (strain ATCC 10987 / NRS 248)).